A 593-amino-acid polypeptide reads, in one-letter code: Probable metalloendopeptidase G1-type (593 aa).

His-41 provides a ligand contact to Zn(2+). Glu-44 is a catalytic residue. A Zn(2+)-binding site is contributed by His-45.

This sequence belongs to the peptidase M44 family. The cofactor is Zn(2+).

Functionally, seems to be involved in viral proteins maturation by cleavage at Ala-Gly-|-Xaa motifs. This is Probable metalloendopeptidase G1-type from Homo sapiens (Human).